We begin with the raw amino-acid sequence, 320 residues long: Protein HEXIM1 (320 aa).

The disordered stretch occupies residues 1 to 124 (MAEPLLSEFQ…RRRPSKKKRL (124 aa)). A compositionally biased stretch (polar residues) spans 9 to 19 (FQHQPQTSNCT). Basic and acidic residues predominate over residues 24–47 (VHEERNPDRPPGAEERVPEEDSRW). Position 98 is a phosphoserine (serine 98). A compositionally biased stretch (basic residues) spans 109-124 (VGKKKHRRRPSKKKRL). Residues 111-138 (KKKHRRRPSKKKRLWKPYYTLTWEEKKK) form a basic region; mediates nuclear localization and interaction with 7SK snRNA and NR3C1 region. The interval 163 to 166 (PYNT) is interaction with P-TEFb. Residues 171 to 211 (MDDHDQEEPDLKTGLYPKRAAAKSDDTSDEDFMEEAGEEDG) form an autoinhibitory acidic region; in absence of 7SK snRNA interacts with the basic region preventing interaction with P-TEFb and modulating subcellular localization region. Residues 174-223 (HDQEEPDLKTGLYPKRAAAKSDDTSDEDFMEEAGEEDGGSDGMGGDGSEF) form a disordered region. Phosphoserine is present on serine 194. Residue threonine 197 is modified to Phosphothreonine. The span at 197 to 212 (TSDEDFMEEAGEEDGG) shows a compositional bias: acidic residues. Residues serine 198, serine 213, and serine 221 each carry the phosphoserine modification. Positions 244-310 (SKQELIKEYL…LTENELHRQQ (67 aa)) form a coiled coil. Residues 247–275 (ELIKEYLELEKCLSRMEDENNRLRLESQR) form a mediates interaction with CCNT1 region. Positions 271 to 316 (LESQRLDGDDARVRELELELDRLRAENLQLLTENELHRQQERAPLS) are required for inhibition of ESR1-dependent transcription.

It belongs to the HEXIM family. In terms of assembly, homooligomer and heterooligomer with HEXIM2; probably dimeric. Core component of the 7SK RNP complex, at least composed of 7SK RNA, LARP7, MEPCE, HEXIM1 (or HEXIM2) and P-TEFb (composed of CDK9 and CCNT1/cyclin-T1). Interacts with the N-CoR complex through NCOR1. Interacts with ESR1 and NR3C1. May interact with NF-kappa-B through RELA. Interacts with CCNT2; mediates formation of a tripartite complex with KPNA2. Part of the HDP-RNP complex composed of at least HEXIM1, PRKDC, XRCC5, XRCC6, paraspeckle proteins (SFPQ, NONO, PSPC1, RBM14, and MATR3) and NEAT1 non-coding RNA.

It localises to the nucleus. Its subcellular location is the cytoplasm. In terms of biological role, transcriptional regulator which functions as a general RNA polymerase II transcription inhibitor. Core component of the 7SK RNP complex: in cooperation with 7SK snRNA sequesters P-TEFb in a large inactive 7SK snRNP complex preventing RNA polymerase II phosphorylation and subsequent transcriptional elongation. May also regulate NF-kappa-B, ESR1, NR3C1 and CIITA-dependent transcriptional activity. Plays a role in the regulation of DNA virus-mediated innate immune response by assembling into the HDP-RNP complex, a complex that serves as a platform for IRF3 phosphorylation and subsequent innate immune response activation through the cGAS-STING pathway. The protein is Protein HEXIM1 (HEXIM1) of Bos taurus (Bovine).